The chain runs to 596 residues: Elongation factor 4 (596 aa).

Residues 2–184 (KHIRNFSIIA…VIVAQIPPPE (183 aa)) form the tr-type G domain. GTP contacts are provided by residues 14–19 (DHGKST) and 131–134 (NKID).

The protein belongs to the TRAFAC class translation factor GTPase superfamily. Classic translation factor GTPase family. LepA subfamily.

The protein localises to the cell inner membrane. It catalyses the reaction GTP + H2O = GDP + phosphate + H(+). Required for accurate and efficient protein synthesis under certain stress conditions. May act as a fidelity factor of the translation reaction, by catalyzing a one-codon backward translocation of tRNAs on improperly translocated ribosomes. Back-translocation proceeds from a post-translocation (POST) complex to a pre-translocation (PRE) complex, thus giving elongation factor G a second chance to translocate the tRNAs correctly. Binds to ribosomes in a GTP-dependent manner. The chain is Elongation factor 4 from Shewanella woodyi (strain ATCC 51908 / MS32).